The chain runs to 367 residues: Phosphoglycerate kinase (367 aa).

Positions 1, 2, 3, 4, 17, 40, 41, 43, 44, 98, 99, 146, and 147 each coordinate (2R)-3-phosphoglycerate. Residue Gly-190 coordinates ADP. Residue Gly-190 participates in CDP binding. Residues Ala-191 and Lys-192 each coordinate AMP. Ala-191 contributes to the ATP binding site. Ala-191 provides a ligand contact to Mg(2+). Mg(2+)-binding residues include Ala-194 and Asp-195. A CDP-binding site is contributed by Asp-195. Lys-196 provides a ligand contact to AMP. Lys-196 is a binding site for ATP. Residue Gly-214 coordinates ADP. Gly-214 is a binding site for CDP. The AMP site is built by Gly-215 and Gly-289. ATP-binding residues include Gly-215 and Gly-289. CDP contacts are provided by Gly-314 and Phe-319. Phe-319 contributes to the ADP binding site. Glu-320 is a binding site for AMP. Residues Glu-320, Asp-351, and Thr-352 each coordinate ATP. Asp-351 serves as a coordination point for Mg(2+).

The protein belongs to the phosphoglycerate kinase family. Monomer. Mg(2+) serves as cofactor.

It catalyses the reaction (2R)-3-phosphoglycerate + ATP = (2R)-3-phospho-glyceroyl phosphate + ADP. The protein operates within carbohydrate degradation; glycolysis; pyruvate from D-glyceraldehyde 3-phosphate: step 2/5. The chain is Phosphoglycerate kinase (PGK) from Paramecium primaurelia.